Reading from the N-terminus, the 426-residue chain is C2H2 type master regulator of conidiophore development brlA (426 aa).

Disordered regions lie at residues 25-71 (CPSM…DRGT) and 281-302 (GVRLQRQPSRKMARKQPSKQSL). Low complexity predominate over residues 30-44 (SSFSPLESPTPTPTS). Residues 45-58 (IYSQGSLASPSWPE) show a composition bias toward polar residues. Positions 288–297 (PSRKMARKQP) are enriched in basic residues. 2 consecutive C2H2-type zinc fingers follow at residues 316 to 340 (FKCKEPGCKGRFKRQEHLKRHMKSH) and 346 to 371 (HVCWVPGCHRAFSRSDNLNAHYTKTH). The tract at residues 384 to 426 (LDETSPDYNPDYRGPLTADGRPMPGGTLDESMPSREISMEWDE) is disordered.

The protein resides in the nucleus. Its function is as follows. BrlA, abaA and wetA are pivotal regulators of conidiophore development and conidium maturation. They act individually and together to regulate their own expression and that of numerous other sporulation-specific genes. Binds promoters of target genes at brlA response elements (BREs) containing the conserved sequence 5'-(C/A)(A/G)AGGG(G/A)-3'. Positively regulates expression of the gliotoxin biosynthetic gene cluster in actively growing vegetative cells, and likely bridges morphological and chemical development during the life-cycle. Regulates (directly or indirectly) the ergot cluster genes. Positively regulates expression of the fumiquinazoline C biosynthetic gene cluster. Positively regulates expression of the melanin biosynthetic gene cluster. Mediates repression of ribosomal protein gene expression in response to nitrogen depletion. This Aspergillus fumigatus (strain ATCC MYA-4609 / CBS 101355 / FGSC A1100 / Af293) (Neosartorya fumigata) protein is C2H2 type master regulator of conidiophore development brlA.